Here is a 254-residue protein sequence, read N- to C-terminus: Triosephosphate isomerase (254 aa).

9 to 11 serves as a coordination point for substrate; sequence NWK. His96 serves as the catalytic Electrophile. Residue Glu168 is the Proton acceptor of the active site. Substrate is bound by residues Gly174 and Ser213.

It belongs to the triosephosphate isomerase family. In terms of assembly, homodimer.

It localises to the cytoplasm. It carries out the reaction D-glyceraldehyde 3-phosphate = dihydroxyacetone phosphate. It participates in carbohydrate biosynthesis; gluconeogenesis. The protein operates within carbohydrate degradation; glycolysis; D-glyceraldehyde 3-phosphate from glycerone phosphate: step 1/1. Involved in the gluconeogenesis. Catalyzes stereospecifically the conversion of dihydroxyacetone phosphate (DHAP) to D-glyceraldehyde-3-phosphate (G3P). In Buchnera aphidicola subsp. Schizaphis graminum (strain Sg), this protein is Triosephosphate isomerase.